The chain runs to 803 residues: 3',5'-cyclic-AMP phosphodiesterase 4D (803 aa).

Residues 1-103 (MEAEGSSVPA…SGASRVRHRG (103 aa)) are disordered. A phosphoserine mark is found at H52 and H56. Residues 58–85 (PPPPPPSPQPQLQPPPPPPLPPPPPPPG) show a composition bias toward pro residues. Phosphoserine occurs at positions 137, 294, 296, 343, and 370. Residues 338 to 358 (EVEIPSPTQKEKEKKKRPMSQ) form a disordered region. Residues 381 to 710 (VKTEQEDVLA…EWYQSTIPQS (330 aa)) form the PDEase domain. A Glycyl lysine isopeptide (Lys-Gly) (interchain with G-Cter in SUMO) cross-link involves residue K382. H457 (proton donor) is an active-site residue. H457 serves as a coordination point for 3',5'-cyclic AMP. Residue H457 participates in AMP binding. Zn(2+) is bound by residues H461, H497, D498, and D615. AMP is bound by residues D498, D615, N618, Q666, and F669. D498 provides a ligand contact to Mg(2+). Mn(2+) is bound at residue D498. Q666 and F669 together coordinate 3',5'-cyclic AMP. 2 disordered regions span residues 705-724 (STIPQSPSPAPDDQEDGRQG) and 732-803 (ELTL…CPDT). The segment covering 757–768 (CSDSKTLCTQDS) has biased composition (polar residues). Over residues 774 to 789 (PLDEQVEEEAVAEEES) the composition is skewed to acidic residues.

The protein belongs to the cyclic nucleotide phosphodiesterase family. PDE4 subfamily. In terms of assembly, homodimer for the long isoforms. Isoforms with truncated N-termini are monomeric. Binds ARRB2. Isoform 33 is part of a ternary complex containing PRKAR2A, PRKAR2B and AKAP9. Identified in a complex composed of RYR1, PDE4D, PKA, FKBP1A and protein phosphatase 1 (PP1). Interacts with PDE4DIP. Isoform 5 interacts (via N-terminal region) with SHANK2 (via proline-rich region); the interaction is increased in a PKA-dependent manner. Isoform 33, isoform 4, isoform 7, isoform 8 and isoform 9 but not isoform 32 and isoform 6 interact with SHANK2. Isoform 31 interacts weakly with SHANK2. It depends on Zn(2+) as a cofactor. Mg(2+) serves as cofactor. The cofactor is Mn(2+). Isoform 1 and isoform 9 are rapidly activated by PKA through phosphorylation. Long isoforms that share a conserved PKA phosphorylation site in the N-terminus are also activated. In terms of processing, sumoylation of long isoforms by PIAS4 augments their activation by PKA phosphorylation and represses their inhibition by ERK phosphorylation. Expressed in epithelial cells. Isoform 33, isoform 4, isoform 5 and isoform 9 are expressed in brain. Isoform 33, isoform 5, isoform 8 and isoform 9 are expressed in heart (at protein level). Isoform 4 and isoform 6 are strongly expressed in cortex and cerebellum. Isoform 7 is strongly expressed in cortex and testis; weakly expressed in kidney, lung, spleen and cerebellum. Isoform 8 is strongly expressed in lung, heart and liver. Isoform 31, isoform 32, isoform 33, isoform 5 and isoform 9 are widely distributed.

Its subcellular location is the apical cell membrane. It is found in the cytoplasm. The protein resides in the membrane. It localises to the cytoskeleton. The protein localises to the microtubule organizing center. Its subcellular location is the centrosome. The enzyme catalyses 3',5'-cyclic AMP + H2O = AMP + H(+). The protein operates within purine metabolism; 3',5'-cyclic AMP degradation; AMP from 3',5'-cyclic AMP: step 1/1. With respect to regulation, activated by phosphatidic acid. Inhibited by rolipram. Hydrolyzes the second messenger cAMP, which is a key regulator of many important physiological processes. In Rattus norvegicus (Rat), this protein is 3',5'-cyclic-AMP phosphodiesterase 4D (Pde4d).